The chain runs to 114 residues: Fluoride-specific ion channel FluC 2 (114 aa).

3 consecutive transmembrane segments (helical) span residues 30–50 (FPVA…LLSG), 57–77 (TFAL…TFAV), and 88–108 (ALPS…AAWL). The Na(+) site is built by Gly67 and Thr70.

The protein belongs to the fluoride channel Fluc/FEX (TC 1.A.43) family.

It is found in the cell membrane. The catalysed reaction is fluoride(in) = fluoride(out). With respect to regulation, na(+) is not transported, but it plays an essential structural role and its presence is essential for fluoride channel function. In terms of biological role, fluoride-specific ion channel. Important for reducing fluoride concentration in the cell, thus reducing its toxicity. This chain is Fluoride-specific ion channel FluC 2, found in Rhodococcus jostii (strain RHA1).